We begin with the raw amino-acid sequence, 210 residues long: MTDQGIVKINASLRKNVGTGPSRALRLSGEIPAVIYGKGRDSLSISLSNREFVSKYRSAALSTHLIELEIDNKKEYVLMRDVQKHPVTDRIQHVDFQFIDYGTEIKIEVPLIFTNEQKCIGIKRGGVLNILHRTLSIKCSPKAILQNIEIDLSGLTTGHSIHVSDLKLPPEVNVTMKEHNPAIVTISSASTEKEAESNQESTSTTPSSES.

The disordered stretch occupies residues 186-210 (ISSASTEKEAESNQESTSTTPSSES). The segment covering 198 to 210 (NQESTSTTPSSES) has biased composition (low complexity).

The protein belongs to the bacterial ribosomal protein bL25 family. CTC subfamily. Part of the 50S ribosomal subunit; part of the 5S rRNA/L5/L18/L25 subcomplex. Contacts the 5S rRNA. Binds to the 5S rRNA independently of L5 and L18.

Functionally, this is one of the proteins that binds to the 5S RNA in the ribosome where it forms part of the central protuberance. The sequence is that of Large ribosomal subunit protein bL25 from Ehrlichia chaffeensis (strain ATCC CRL-10679 / Arkansas).